A 212-amino-acid chain; its full sequence is Orotate phosphoribosyltransferase (212 aa).

5-phospho-alpha-D-ribose 1-diphosphate contacts are provided by residues arginine 94, lysine 98, histidine 100, and 120–128 (EDLISTGGS). Serine 124 is an orotate binding site.

This sequence belongs to the purine/pyrimidine phosphoribosyltransferase family. PyrE subfamily. Homodimer. Requires Mg(2+) as cofactor.

The enzyme catalyses orotidine 5'-phosphate + diphosphate = orotate + 5-phospho-alpha-D-ribose 1-diphosphate. It participates in pyrimidine metabolism; UMP biosynthesis via de novo pathway; UMP from orotate: step 1/2. In terms of biological role, catalyzes the transfer of a ribosyl phosphate group from 5-phosphoribose 1-diphosphate to orotate, leading to the formation of orotidine monophosphate (OMP). In Bacillus pumilus (strain SAFR-032), this protein is Orotate phosphoribosyltransferase.